Consider the following 555-residue polypeptide: Benzoyl-CoA-dihydrodiol lyase (555 aa).

This sequence belongs to the benzoyl-CoA oxygenase component C family. Homodimer.

It catalyses the reaction 2,3-epoxy-2,3-dihydrobenzoyl-CoA + 2 H2O = (3Z)-6-oxohex-3-enoyl-CoA + formate + H(+). Functionally, catalyzes the ring opening of 2,3-epoxy-2,3-dihydroxybenzoyl-CoA to form 3,4-didehydroadipyl-CoA semialdehyde. The chain is Benzoyl-CoA-dihydrodiol lyase (boxC) from Aromatoleum evansii (Azoarcus evansii).